Reading from the N-terminus, the 291-residue chain is MDRRESSVMKSPSLRLPAPAKLNLTLRITGRRPDGYHDLQTVFQFVDVCDWLEFRADASGEIRLQTSLAGVPAERNLIVRAARLLKEYAGVAAGADIVLEKNLPMGGGLGGGSSNAATTLVALNRLWDLGLDRQTLMNLGLRLGADVPIFVFGEGAWAEGVGERLQVLELPEPWYVIVVPPCHVSTAEIFNAPDLTRDNDPITIADFLAGSHQNHCLDAVVRRYPVVGEAMCVLGRYSRDVRLTGTGACVYSVHGSEEEAKAACDDLSRDWVAIVASGRNLSPLYEALNER.

Lysine 21 is a catalytic residue. 104–114 (PMGGGLGGGSS) serves as a coordination point for ATP. Aspartate 146 is an active-site residue.

This sequence belongs to the GHMP kinase family. IspE subfamily.

The enzyme catalyses 4-CDP-2-C-methyl-D-erythritol + ATP = 4-CDP-2-C-methyl-D-erythritol 2-phosphate + ADP + H(+). The protein operates within isoprenoid biosynthesis; isopentenyl diphosphate biosynthesis via DXP pathway; isopentenyl diphosphate from 1-deoxy-D-xylulose 5-phosphate: step 3/6. Functionally, catalyzes the phosphorylation of the position 2 hydroxy group of 4-diphosphocytidyl-2C-methyl-D-erythritol. This chain is 4-diphosphocytidyl-2-C-methyl-D-erythritol kinase, found in Methylococcus capsulatus (strain ATCC 33009 / NCIMB 11132 / Bath).